Consider the following 496-residue polypeptide: MLQTKDYEFWFVTGSQHLYGEETLELVDQHAKSICEGLSGISSRYKITHKPVVTSPETIRELLREAEYSETCAGIITWMHTFSPAKMWIEGLSSYQKPLMHLHTQYNRDIPWGTIDMDFMNSNQSAHGDREYGYINSRMGLSRKVIAGYWDDEEVKKEMSQWMDTAAALNESRHIKVARFGDNMRHVAVTDGDKVGAHIQFGWQVDGYGIGDLVEVMDRITDDEVDTLYAEYDRLYVISEETKRDEAKVASIKEQAKIELGLTAFLEQGGYTAFTTSFEVLHGMKQLPGLAVQRLMEKGYGFAGEGDWKTAALVRMMKIMAKGKRTSFMEDYTYHFEPGNEMILGSHMLEVCPTVALDQPKIEVHSLSIGGKEDPARLVFNGISGSAIQASIVDIGGRFRLVLNEVNGQEIEKDMPNLPVARVLWKPEPSLKTAAEAWILAGGAHHTCLSYELTAEQMLDWAEMAGIESVLISRDTTIHKLKHELKWNEALYRLQK.

Positions 305, 330, 347, and 446 each coordinate Mn(2+).

It belongs to the arabinose isomerase family. Mn(2+) serves as cofactor.

The enzyme catalyses beta-L-arabinopyranose = L-ribulose. It participates in carbohydrate degradation; L-arabinose degradation via L-ribulose; D-xylulose 5-phosphate from L-arabinose (bacterial route): step 1/3. Functionally, catalyzes the conversion of L-arabinose to L-ribulose. The protein is L-arabinose isomerase of Bacillus subtilis (strain 168).